A 480-amino-acid polypeptide reads, in one-letter code: 11S globulin subunit beta (480 aa).

The signal sequence occupies residues 1–21; that stretch reads MARSSLFTFLCLAVFINGCLS. Pyrrolidone carboxylic acid is present on Gln-22. Intrachain disulfides connect Cys-48/Cys-81 and Cys-124/Cys-303. Cupin type-1 domains lie at 51-251 and 309-458; these read ENLR…GLVR and QNIG…EEAQ. Mg(2+) contacts are provided by Lys-408 and Arg-468.

Belongs to the 11S seed storage protein (globulins) family. As to quaternary structure, hexamer; each subunit is composed of an acidic and a basic chain derived from a single precursor and linked by a disulfide bond.

In terms of biological role, this is a seed storage protein. This chain is 11S globulin subunit beta, found in Cucurbita maxima (Pumpkin).